The primary structure comprises 151 residues: Large ribosomal subunit protein uL15 (151 aa).

The tract at residues 1-57 (MTLRLDSLKSNKGARRRKLRKGRGIAAGQGASCGFGMRGQKSRSGRPTRPGFEGGQM) is disordered. The segment covering 12–23 (KGARRRKLRKGR) has biased composition (basic residues). The span at 25–37 (IAAGQGASCGFGM) shows a compositional bias: gly residues.

Belongs to the universal ribosomal protein uL15 family. In terms of assembly, part of the 50S ribosomal subunit.

In terms of biological role, binds to the 23S rRNA. In Synechococcus sp. (strain CC9605), this protein is Large ribosomal subunit protein uL15.